Reading from the N-terminus, the 47-residue chain is Large ribosomal subunit protein eL40 (47 aa).

It belongs to the eukaryotic ribosomal protein eL40 family.

The sequence is that of Large ribosomal subunit protein eL40 from Methanococcus aeolicus (strain ATCC BAA-1280 / DSM 17508 / OCM 812 / Nankai-3).